The primary structure comprises 129 residues: Gene 58 protein (129 aa).

Residues 87–129 (GNIPVQRKPARKPSRRVFGESRSSGSSGSTVRPGIRGRSTPWS) are disordered. Residues 106-115 (ESRSSGSSGS) are compositionally biased toward low complexity.

This Mycobacterium (Mycobacteriophage D29) protein is Gene 58 protein (58).